A 547-amino-acid polypeptide reads, in one-letter code: G protein-coupled receptor associated sorting protein 3 (547 aa).

Residues 1-10 (MAGTKNKTRA) are compositionally biased toward basic residues. Disordered stretches follow at residues 1-32 (MAGT…EATG) and 80-102 (TLGK…STCK).

This sequence belongs to the GPRASP family. In terms of assembly, homodimer. Highly expressed in brain. Not expressed in lung or liver. Down-regulated in brain from patients suffering from Alzheimer disease.

The protein resides in the cytoplasm. It is found in the nucleus. Its function is as follows. Survival and differentiation promoting protein that plays a role in the regulation of neurosynaptogenesis. Induces phosphatase PP2A activity which results in APP dephosphorylation and inhibits BACE1-mediated processing of APP. This is G protein-coupled receptor associated sorting protein 3 from Homo sapiens (Human).